The following is a 233-amino-acid chain: Homeobox protein EMX1 (233 aa).

Positions 135-194 form a DNA-binding region, homeobox; it reads PKRIRTAFSPSQLLRLERAFEKNHYVVGAERKQLASSLSLSETQVKVWFQNRRTKYKRQK. The segment at 192-233 is disordered; sequence RQKLEEEGPDSDQKKKGSHHINRWRLATKQPNGEDIDVTSND. Basic and acidic residues predominate over residues 193–206; the sequence is QKLEEEGPDSDQKK.

The protein belongs to the EMX homeobox family.

Its subcellular location is the nucleus. Its function is as follows. May function in combinations with OTX1/2 to specify cell fates in the developing central nervous system. This Xenopus tropicalis (Western clawed frog) protein is Homeobox protein EMX1 (emx1).